The sequence spans 212 residues: ATP phosphoribosyltransferase (212 aa).

The protein belongs to the ATP phosphoribosyltransferase family. Short subfamily. Heteromultimer composed of HisG and HisZ subunits.

It is found in the cytoplasm. It carries out the reaction 1-(5-phospho-beta-D-ribosyl)-ATP + diphosphate = 5-phospho-alpha-D-ribose 1-diphosphate + ATP. It participates in amino-acid biosynthesis; L-histidine biosynthesis; L-histidine from 5-phospho-alpha-D-ribose 1-diphosphate: step 1/9. Functionally, catalyzes the condensation of ATP and 5-phosphoribose 1-diphosphate to form N'-(5'-phosphoribosyl)-ATP (PR-ATP). Has a crucial role in the pathway because the rate of histidine biosynthesis seems to be controlled primarily by regulation of HisG enzymatic activity. The polypeptide is ATP phosphoribosyltransferase (Geobacter metallireducens (strain ATCC 53774 / DSM 7210 / GS-15)).